A 266-amino-acid polypeptide reads, in one-letter code: Undecaprenyl-diphosphatase (266 aa).

The next 8 membrane-spanning stretches (helical) occupy residues 1 to 21 (MDTF…FLPI), 39 to 59 (QGLS…VMYF), 87 to 107 (WWII…KDFI), 111 to 131 (FRSI…LWWA), 144 to 164 (VGWK…IPGT), 183 to 203 (AAAR…AILV), 218 to 238 (ALGL…HYFL), and 246 to 266 (MTPF…IIFL).

The protein belongs to the UppP family.

Its subcellular location is the cell inner membrane. The enzyme catalyses di-trans,octa-cis-undecaprenyl diphosphate + H2O = di-trans,octa-cis-undecaprenyl phosphate + phosphate + H(+). Catalyzes the dephosphorylation of undecaprenyl diphosphate (UPP). Confers resistance to bacitracin. This chain is Undecaprenyl-diphosphatase, found in Shewanella pealeana (strain ATCC 700345 / ANG-SQ1).